We begin with the raw amino-acid sequence, 615 residues long: MATPPPLRRVAALLLLLVAAASTPTARADLVVTRADRKVDLTSHIVRVLTSLKVENSGPEAVSQFLLAFPNVQAKNLAAIRAFGTEEKVKGPSMVLPIEVVQPSGVPPELTFFSASLSKPLEKGKTLHLDVLTVFTHSVQPFPEEITQAESQLVVYQDSAQYLSPYPVKVQTLSIRLPGGRVESYTKYPNTKLAESELKYGPYEDLPPFSYSPMVVHYENNNPFAVAKEVIREIEISHWGNVQITEHYNIAHGGAKLKGEFSRIDYQSRPYIRGVSSFRHLIARLPPRAHSIYYRDEIGNISTSHLWSDSKKTQLEVEPRFPLFGGWQTTFTIGYGLPLQDFVFNSDGKRFLNITFGSPVEEILIEKLIVKVVLPEGSKDIDISVPFPTKQEQEVKYSHLDISGRPVVVLEKLDVIPEHNLYFQVYYRFNNISLLREPMMLITGFFLLFMACIVYMRTDMSISKNSPSYLAKVQWDEVQSIIQQIQAIFNQCLAAHDKLETSLHELSRSGDVKSCKVARKTADAQFKELAKELKPLLTSLQSSSQSYQIWPKVEELVAKERELQDKLMTRHSTVVDSFEKKLRGQDVENRIAAQQQKVAALRQEVESLLEYISEI.

An N-terminal signal peptide occupies residues 1–28 (MATPPPLRRVAALLLLLVAAASTPTARA). The Lumenal segment spans residues 29-437 (DLVVTRADRK…RFNNISLLRE (409 aa)). At lysine 187 the chain carries N6-acetyllysine. Asparagine 300, asparagine 353, and asparagine 431 each carry an N-linked (GlcNAc...) asparagine glycan. A helical transmembrane segment spans residues 438–455 (PMMLITGFFLLFMACIVY). The Cytoplasmic segment spans residues 456 to 615 (MRTDMSISKN…ESLLEYISEI (160 aa)).

This sequence belongs to the OST1 family. Component of the oligosaccharyltransferase (OST) complex.

The protein localises to the endoplasmic reticulum membrane. Its pathway is protein modification; protein glycosylation. Its function is as follows. Subunit of the oligosaccharyl transferase (OST) complex that catalyzes the initial transfer of a defined glycan (Glc(3)Man(9)GlcNAc(2) in eukaryotes) from the lipid carrier dolichol-pyrophosphate to an asparagine residue within an Asn-X-Ser/Thr consensus motif in nascent polypeptide chains, the first step in protein N-glycosylation. N-glycosylation occurs cotranslationally and the complex associates with the Sec61 complex at the channel-forming translocon complex that mediates protein translocation across the endoplasmic reticulum (ER). All subunits are required for a maximal enzyme activity. The chain is Dolichyl-diphosphooligosaccharide--protein glycosyltransferase subunit 1A (OST1A) from Oryza sativa subsp. japonica (Rice).